The primary structure comprises 309 residues: Pseudouridine-5'-phosphate glycosidase 2 (309 aa).

The Proton donor role is filled by Glu26. Substrate contacts are provided by Lys87 and Val107. A Mn(2+)-binding site is contributed by Asp139. A substrate-binding site is contributed by 141 to 143; the sequence is SAD. Lys160 serves as the catalytic Nucleophile.

It belongs to the pseudouridine-5'-phosphate glycosidase family. As to quaternary structure, homotrimer. Mn(2+) is required as a cofactor.

It carries out the reaction D-ribose 5-phosphate + uracil = psi-UMP + H2O. Functionally, catalyzes the reversible cleavage of pseudouridine 5'-phosphate (PsiMP) to ribose 5-phosphate and uracil. Functions biologically in the cleavage direction, as part of a pseudouridine degradation pathway. This chain is Pseudouridine-5'-phosphate glycosidase 2, found in Rhizobium johnstonii (strain DSM 114642 / LMG 32736 / 3841) (Rhizobium leguminosarum bv. viciae).